We begin with the raw amino-acid sequence, 572 residues long: 2-isopropylmalate synthase (572 aa).

The 275-residue stretch at 31–305 (PIWMSTDLRD…DPGLDFSNIN (275 aa)) folds into the Pyruvate carboxyltransferase domain. Aspartate 40, histidine 244, histidine 246, and asparagine 280 together coordinate Mg(2+). The regulatory domain stretch occupies residues 437–572 (NTAPIHYVGH…MNDAAESVGV (136 aa)).

Belongs to the alpha-IPM synthase/homocitrate synthase family. LeuA type 2 subfamily. As to quaternary structure, homodimer. It depends on Mg(2+) as a cofactor.

Its subcellular location is the cytoplasm. The catalysed reaction is 3-methyl-2-oxobutanoate + acetyl-CoA + H2O = (2S)-2-isopropylmalate + CoA + H(+). The protein operates within amino-acid biosynthesis; L-leucine biosynthesis; L-leucine from 3-methyl-2-oxobutanoate: step 1/4. Its function is as follows. Catalyzes the condensation of the acetyl group of acetyl-CoA with 3-methyl-2-oxobutanoate (2-ketoisovalerate) to form 3-carboxy-3-hydroxy-4-methylpentanoate (2-isopropylmalate). The protein is 2-isopropylmalate synthase of Paraburkholderia phytofirmans (strain DSM 17436 / LMG 22146 / PsJN) (Burkholderia phytofirmans).